Here is a 275-residue protein sequence, read N- to C-terminus: Putative pyruvate, phosphate dikinase regulatory protein (275 aa).

ADP is bound at residue 151–158; that stretch reads GVSRTSKT.

It belongs to the pyruvate, phosphate/water dikinase regulatory protein family. PDRP subfamily.

The catalysed reaction is N(tele)-phospho-L-histidyl/L-threonyl-[pyruvate, phosphate dikinase] + ADP = N(tele)-phospho-L-histidyl/O-phospho-L-threonyl-[pyruvate, phosphate dikinase] + AMP + H(+). The enzyme catalyses N(tele)-phospho-L-histidyl/O-phospho-L-threonyl-[pyruvate, phosphate dikinase] + phosphate + H(+) = N(tele)-phospho-L-histidyl/L-threonyl-[pyruvate, phosphate dikinase] + diphosphate. Functionally, bifunctional serine/threonine kinase and phosphorylase involved in the regulation of the pyruvate, phosphate dikinase (PPDK) by catalyzing its phosphorylation/dephosphorylation. In Rhodospirillum rubrum (strain ATCC 11170 / ATH 1.1.1 / DSM 467 / LMG 4362 / NCIMB 8255 / S1), this protein is Putative pyruvate, phosphate dikinase regulatory protein.